The primary structure comprises 513 residues: E3 ubiquitin-protein ligase RNF25 (513 aa).

In terms of domain architecture, RWD spans 9-117; sequence SEIEVLQSIY…ERAKEILTDS (109 aa). Residues C124, C127, C142, H144, H147, C150, C187, and C190 each coordinate Zn(2+). Residues 124 to 191 form an RING-type; atypical zinc finger; the sequence is CVICLYDFKE…ELAVVCPVCR (68 aa). The segment at 261 to 513 is disordered; sequence NLSDTPGMTD…EKEFRKEGVL (253 aa). The segment covering 271 to 297 has biased composition (low complexity); that stretch reads SSGAESSQSLPSSSPDSTSTTQTSQNQ. 2 stretches are compositionally biased toward polar residues: residues 345–397 and 406–423; these read SDKI…QDML and EVSQQKECISKEVTQTIL. The span at 426 to 440 shows a compositional bias: basic and acidic residues; the sequence is GHPEREHVGRGDKRG. Residues 482 to 498 are compositionally biased toward gly residues; that stretch reads AGRGHRGGGAYRGGGRG. Residues 501–513 show a composition bias toward basic and acidic residues; the sequence is QRVEKEFRKEGVL.

Belongs to the RNF25 family.

The protein localises to the cytoplasm. The enzyme catalyses S-ubiquitinyl-[E2 ubiquitin-conjugating enzyme]-L-cysteine + [acceptor protein]-L-lysine = [E2 ubiquitin-conjugating enzyme]-L-cysteine + N(6)-ubiquitinyl-[acceptor protein]-L-lysine.. Its pathway is protein modification; protein ubiquitination. In terms of biological role, E3 ubiquitin-protein ligase that plays a key role in the RNF14-RNF25 translation quality control pathway, a pathway that takes place when a ribosome has stalled during translation, and which promotes ubiquitination and degradation of translation factors on stalled ribosomes. May also acts as a positive regulator of the Wnt signaling. In Danio rerio (Zebrafish), this protein is E3 ubiquitin-protein ligase RNF25.